Consider the following 126-residue polypeptide: Gas vesicle protein J (126 aa).

This sequence belongs to the gas vesicle GvpA family. Interacts with GvpA.

It localises to the gas vesicle. Its function is as follows. A minor component of the gas vesicle, might be involved in nucleating gas vesicle formation. Gas vesicles (GV) are hollow, gas filled proteinaceous nanostructures. During planktonic growth they allow positioning of the organism at a favorable depth for light or nutrient acquisition. In Pseudanabaena galeata (strain PCC 6901), this protein is Gas vesicle protein J.